The primary structure comprises 710 residues: NAD(P)H-quinone oxidoreductase subunit 5, chloroplastic (710 aa).

A run of 17 helical transmembrane segments spans residues 9 to 29 (WIIP…LLIF), 40 to 60 (WSFQ…YLSI), 89 to 109 (IDPL…LVLI), 125 to 145 (FTYM…SNFI), 147 to 167 (IYIF…FWFT), 185 to 205 (GDFG…SFEF), 221 to 241 (VNLL…IAKS), 258 to 278 (TPIS…FLVA), 280 to 300 (LLPL…IGII), 327 to 347 (LGYM…FHLI), 354 to 374 (ALLF…IGYS), 396 to 416 (GAFL…CFWS), 425 to 445 (WLYS…TAFY), 519 to 539 (MLFP…LGIP), 571 to 591 (FLKH…IAFL), 657 to 676 (SFDL…LSFI), and 689 to 709 (IPFY…LFYK).

The protein belongs to the complex I subunit 5 family. In terms of assembly, NDH is composed of at least 16 different subunits, 5 of which are encoded in the nucleus.

The protein localises to the plastid. It is found in the chloroplast thylakoid membrane. It catalyses the reaction a plastoquinone + NADH + (n+1) H(+)(in) = a plastoquinol + NAD(+) + n H(+)(out). The catalysed reaction is a plastoquinone + NADPH + (n+1) H(+)(in) = a plastoquinol + NADP(+) + n H(+)(out). Functionally, NDH shuttles electrons from NAD(P)H:plastoquinone, via FMN and iron-sulfur (Fe-S) centers, to quinones in the photosynthetic chain and possibly in a chloroplast respiratory chain. The immediate electron acceptor for the enzyme in this species is believed to be plastoquinone. Couples the redox reaction to proton translocation, and thus conserves the redox energy in a proton gradient. This Ipomoea purpurea (Common morning glory) protein is NAD(P)H-quinone oxidoreductase subunit 5, chloroplastic (ndhF).